A 691-amino-acid chain; its full sequence is DNA ligase (691 aa).

Residues 53-57, 102-103, and glutamate 135 contribute to the NAD(+) site; these read DSEYD and SL. Residue lysine 137 is the N6-AMP-lysine intermediate of the active site. Residues arginine 158, glutamate 195, lysine 310, and lysine 334 each contribute to the NAD(+) site. Zn(2+) contacts are provided by cysteine 428, cysteine 431, cysteine 446, and cysteine 452. One can recognise a BRCT domain in the interval 613–691; the sequence is SEGLPLDGQT…EEEFLVLVGE (79 aa).

Belongs to the NAD-dependent DNA ligase family. LigA subfamily. It depends on Mg(2+) as a cofactor. Mn(2+) is required as a cofactor.

The enzyme catalyses NAD(+) + (deoxyribonucleotide)n-3'-hydroxyl + 5'-phospho-(deoxyribonucleotide)m = (deoxyribonucleotide)n+m + AMP + beta-nicotinamide D-nucleotide.. Its function is as follows. DNA ligase that catalyzes the formation of phosphodiester linkages between 5'-phosphoryl and 3'-hydroxyl groups in double-stranded DNA using NAD as a coenzyme and as the energy source for the reaction. It is essential for DNA replication and repair of damaged DNA. This Psychrobacter cryohalolentis (strain ATCC BAA-1226 / DSM 17306 / VKM B-2378 / K5) protein is DNA ligase.